A 464-amino-acid polypeptide reads, in one-letter code: ERO1-like protein alpha (464 aa).

The N-terminal stretch at 1 to 23 (MGRAWGLLVGLLGVVWLLRLGHG) is a signal peptide. Cystine bridges form between Cys35/Cys48, Cys37/Cys46, Cys85/Cys387, Cys94/Cys99, Cys94/Cys130, Cys99/Cys104, Cys207/Cys237, and Cys390/Cys393. Phosphoserine occurs at positions 106, 142, and 144. FAD is bound by residues Arg186, Thr188, and Trp199. FAD-binding residues include Ser248 and His251. N-linked (GlcNAc...) asparagine glycosylation occurs at Asn276. Residues Arg283 and Arg296 each contribute to the FAD site. A glycan (N-linked (GlcNAc...) asparagine) is linked at Asn380.

Belongs to the EROs family. In terms of assembly, predominantly monomer. May function both as a monomer and a homodimer. Interacts with PDILT. Interacts with ERP44; the interaction results in retention of ERO1A in the endoplasmic reticulum. FAD is required as a cofactor. Post-translationally, N-glycosylated. In terms of processing, the Cys-94/Cys-99 and Cys-390/Cys-393 disulfide bonds constitute the redox-active center. The Cys-94/Cys-99 disulfide bond may accept electron from P4HB and funnel them to the active site disulfide Cys-390/Cys-393. The regulatory Cys-99/Cys-104 disulfide bond stabilizes the other regulatory bond Cys-94/Cys-130. Phosphorylated on Ser-144 by FAM20C in the Golgi which increases its enzymatic activity. Phosphorylation is induced by lactation. It is also induced by hypoxia and reductive stress. In terms of tissue distribution, widely expressed (at protein level). In the mammary gland, expressed at higher levels in lactating mice than in virgin mice (at protein level).

The protein localises to the endoplasmic reticulum membrane. It is found in the golgi apparatus lumen. It localises to the secreted. Its subcellular location is the cell projection. The protein resides in the dendrite. Its activity is regulated as follows. Enzyme activity is tightly regulated to prevent the accumulation of reactive oxygen species in the endoplasmic reticulum. Reversibly down-regulated by the formation of disulfide bonds between the active site Cys-94 and Cys-130, and between Cys-99 and Cys-104. Glutathione may be required to regulate its activity in the endoplasmic reticulum. Oxidoreductase involved in disulfide bond formation in the endoplasmic reticulum. Efficiently reoxidizes P4HB/PDI, the enzyme catalyzing protein disulfide formation, in order to allow P4HB to sustain additional rounds of disulfide formation. Following P4HB reoxidation, passes its electrons to molecular oxygen via FAD, leading to the production of reactive oxygen species (ROS) in the cell. Required for the proper folding of immunoglobulins. Plays an important role in ER stress-induced, CHOP-dependent apoptosis by activating the inositol 1,4,5-trisphosphate receptor IP3R1. This is ERO1-like protein alpha from Mus musculus (Mouse).